The sequence spans 225 residues: Heptaprenylglyceryl phosphate synthase (225 aa).

Lys-6 contributes to the sn-glycerol 1-phosphate binding site. Positions 8 and 34 each coordinate Mg(2+). Sn-glycerol 1-phosphate is bound by residues 153 to 158, Gly-183, and 203 to 204; these read YVEYSG and GN.

It belongs to the GGGP/HepGP synthase family. Group I subfamily. As to quaternary structure, homodimer. The cofactor is Mg(2+).

It catalyses the reaction sn-glycerol 1-phosphate + all-trans-heptaprenyl diphosphate = 3-heptaprenyl-sn-glycero-1-phosphate + diphosphate. It participates in membrane lipid metabolism; glycerophospholipid metabolism. In terms of biological role, prenyltransferase that catalyzes in vivo the transfer of the heptaprenyl moiety of heptaprenyl pyrophosphate (HepPP; 35 carbon atoms) to the C3 hydroxyl of sn-glycerol-1-phosphate (G1P), producing heptaprenylglyceryl phosphate (HepGP). This reaction is an ether-bond-formation step in the biosynthesis of archaea-type G1P-based membrane lipids found in Bacillales. The sequence is that of Heptaprenylglyceryl phosphate synthase from Listeria monocytogenes serotype 4a (strain HCC23).